We begin with the raw amino-acid sequence, 379 residues long: Succinate--CoA ligase [ADP-forming] subunit beta (379 aa).

One can recognise an ATP-grasp domain in the interval 9 to 236 (KEIARKYGIE…GRDATPYEKV (228 aa)). Residues K46, 53–55 (GRG), E92, V95, and E100 contribute to the ATP site. Positions 192 and 206 each coordinate Mg(2+). Residues N256 and 313–315 (GIT) each bind substrate.

Belongs to the succinate/malate CoA ligase beta subunit family. Heterotetramer of two alpha and two beta subunits. The cofactor is Mg(2+).

The enzyme catalyses succinate + ATP + CoA = succinyl-CoA + ADP + phosphate. The catalysed reaction is GTP + succinate + CoA = succinyl-CoA + GDP + phosphate. The protein operates within carbohydrate metabolism; tricarboxylic acid cycle; succinate from succinyl-CoA (ligase route): step 1/1. Succinyl-CoA synthetase functions in the citric acid cycle (TCA), coupling the hydrolysis of succinyl-CoA to the synthesis of either ATP or GTP and thus represents the only step of substrate-level phosphorylation in the TCA. The beta subunit provides nucleotide specificity of the enzyme and binds the substrate succinate, while the binding sites for coenzyme A and phosphate are found in the alpha subunit. This Desulfurococcus amylolyticus (strain DSM 18924 / JCM 16383 / VKM B-2413 / 1221n) (Desulfurococcus kamchatkensis) protein is Succinate--CoA ligase [ADP-forming] subunit beta.